Here is a 24-residue protein sequence, read N- to C-terminus: Ascaphin-7 (24 aa).

Expressed by the skin glands.

The protein resides in the secreted. Functionally, antimicrobial peptide that shows higher potency against Gram-negative bacteria than against Gram-positive bacteria. Has a very week hemolytic activity. The chain is Ascaphin-7 from Ascaphus truei (Coastal tailed frog).